We begin with the raw amino-acid sequence, 953 residues long: 26S proteasome non-ATPase regulatory subunit 1 (953 aa).

Met-1 is modified (N-acetylmethionine). Thr-273 is modified (phosphothreonine). The disordered stretch occupies residues 277-319 (SVPGSTNTGTVPGPEKDSDSMETEEKTAGAVAGKTPDASPEPK). The span at 290-303 (PEKDSDSMETEEKT) shows a compositional bias: basic and acidic residues. At Lys-310 the chain carries N6-acetyllysine. Thr-311 is subject to Phosphothreonine. Ser-315 bears the Phosphoserine mark. PC repeat units lie at residues 403 to 436 (TATA…PGSA), 441 to 474 (GGLY…DIVR), 476 to 510 (GGSL…VTGE), 511 to 545 (AAGL…EKIL), 547 to 580 (GLAV…ILRR), 581 to 616 (SGMY…DVRR), 617 to 649 (AAVE…PHVR), 651 to 685 (GAAM…YVRQ), 686 to 726 (GALI…DVMA), and 729 to 761 (GAIL…PSVV). An N6-acetyllysine modification is found at Lys-720. The residue at position 830 (Thr-830) is a Phosphothreonine. At Ser-834 the chain carries Phosphoserine. Disordered regions lie at residues 839-881 (AKKK…LDNP) and 930-953 (AHGP…YIDD). Basic and acidic residues-rich tracts occupy residues 842 to 852 (KEKEKEKKEEE) and 859 to 872 (AEKK…KEPE). The span at 936–953 (EEEEQEPEPPEPFEYIDD) shows a compositional bias: acidic residues.

This sequence belongs to the proteasome subunit S1 family. In terms of assembly, component of the 19S proteasome regulatory particle complex. The 26S proteasome consists of a 20S core particle (CP) and two 19S regulatory subunits (RP). The regulatory particle is made of a lid composed of 9 subunits, a base containing 6 ATPases and few additional components including PSMD1. Interacts with ADRM1. Interacts with ZFAND1.

Component of the 26S proteasome, a multiprotein complex involved in the ATP-dependent degradation of ubiquitinated proteins. This complex plays a key role in the maintenance of protein homeostasis by removing misfolded or damaged proteins, which could impair cellular functions, and by removing proteins whose functions are no longer required. Therefore, the proteasome participates in numerous cellular processes, including cell cycle progression, apoptosis, or DNA damage repair. This chain is 26S proteasome non-ATPase regulatory subunit 1 (Psmd1), found in Rattus norvegicus (Rat).